Consider the following 375-residue polypeptide: WAT1-related protein At1g70260 (375 aa).

10 consecutive transmembrane segments (helical) span residues 10–30, 41–61, 72–92, 106–126, 143–163, 191–211, 225–245, 259–278, 289–309, and 312–332; these read LVPF…TIMA, FVFV…FSFL, IFSW…IFMF, IVVC…SIIL, MGTI…GPFI, WFLG…FNVV, VASF…LFME, LYLI…SVHV, VPLF…SFFV, and LHYG…TVSW. Residues 25–134 enclose the EamA domain; sequence ALTIMAKTAL…ILGRSKLDWR (110 aa). Residues 337–356 form a disordered region; sequence ESEEKQSSNEERKSIKTIHH.

This sequence belongs to the drug/metabolite transporter (DMT) superfamily. Plant drug/metabolite exporter (P-DME) (TC 2.A.7.4) family.

It is found in the membrane. The sequence is that of WAT1-related protein At1g70260 from Arabidopsis thaliana (Mouse-ear cress).